The sequence spans 312 residues: Gamma-soluble NSF attachment protein (312 aa).

A disordered region spans residues 281 to 312 (KKKAAAPPQAKPEGTAAPAAEEEEDEYAGGLC). The span at 285 to 299 (AAPPQAKPEGTAAPA) shows a compositional bias: low complexity. Positions 300-312 (AEEEEDEYAGGLC) are enriched in acidic residues.

This sequence belongs to the SNAP family. As to quaternary structure, interacts with RAB11FIP5. Interacts with VTI1A.

It localises to the membrane. The protein localises to the golgi apparatus. Its function is as follows. Required for vesicular transport between the endoplasmic reticulum and the Golgi apparatus. The polypeptide is Gamma-soluble NSF attachment protein (Bos taurus (Bovine)).